Consider the following 132-residue polypeptide: Small ribosomal subunit protein uS8 (132 aa).

The protein belongs to the universal ribosomal protein uS8 family. As to quaternary structure, part of the 30S ribosomal subunit. Contacts proteins S5 and S12.

One of the primary rRNA binding proteins, it binds directly to 16S rRNA central domain where it helps coordinate assembly of the platform of the 30S subunit. The chain is Small ribosomal subunit protein uS8 from Anaeromyxobacter dehalogenans (strain 2CP-1 / ATCC BAA-258).